The primary structure comprises 211 residues: Small ribosomal subunit protein uS3 (211 aa).

Residues 16 to 85 (IDEYFKTKLV…NPQIEVKQVE (70 aa)) form the KH type-2 domain.

This sequence belongs to the universal ribosomal protein uS3 family. Part of the 30S ribosomal subunit.

Its function is as follows. Binds the lower part of the 30S subunit head. The sequence is that of Small ribosomal subunit protein uS3 from Methanococcus maripaludis (strain DSM 14266 / JCM 13030 / NBRC 101832 / S2 / LL).